Here is a 520-residue protein sequence, read N- to C-terminus: 2-isopropylmalate synthase (520 aa).

The 263-residue stretch at 12-274 (IRIFDTTLRD…DSAINTPRIV (263 aa)) folds into the Pyruvate carboxyltransferase domain. Residues Asp-21, His-209, His-211, and Asn-245 each contribute to the Mn(2+) site. Residues 396–520 (RLASMTISDV…VIAGKTAAVA (125 aa)) are regulatory domain.

The protein belongs to the alpha-IPM synthase/homocitrate synthase family. LeuA type 1 subfamily. As to quaternary structure, homodimer. Mn(2+) serves as cofactor.

Its subcellular location is the cytoplasm. The catalysed reaction is 3-methyl-2-oxobutanoate + acetyl-CoA + H2O = (2S)-2-isopropylmalate + CoA + H(+). Its pathway is amino-acid biosynthesis; L-leucine biosynthesis; L-leucine from 3-methyl-2-oxobutanoate: step 1/4. Functionally, catalyzes the condensation of the acetyl group of acetyl-CoA with 3-methyl-2-oxobutanoate (2-ketoisovalerate) to form 3-carboxy-3-hydroxy-4-methylpentanoate (2-isopropylmalate). The chain is 2-isopropylmalate synthase from Xanthomonas oryzae pv. oryzae (strain KACC10331 / KXO85).